The sequence spans 172 residues: C-phycocyanin beta chain (172 aa).

N4-methylasparagine is present on N72. (2R,3E)-phycocyanobilin-binding residues include C82 and C153.

The protein belongs to the phycobiliprotein family. Heterodimer of an alpha and a beta subunit, which further assembles into trimers and the trimers into hexamers. The basic functional unit of phycobiliproteins is a ring-shaped hexamer formed from two back-to-back trimers contacting via the alpha chain subunits. The trimers are composed of alpha/beta subunit heterodimers arranged around a three-fold axis of symmetry. The phycoerythrins also contain a gamma subunit which is located in the center of the hexamer. In terms of processing, contains two covalently linked bilin chromophores.

It is found in the plastid. Its subcellular location is the chloroplast thylakoid membrane. Light-harvesting photosynthetic bile pigment-protein from the phycobiliprotein complex (phycobilisome, PBS). Phycocyanin is the major phycobiliprotein in the PBS rod. In Pyropia haitanensis (Red seaweed), this protein is C-phycocyanin beta chain (cpcB).